Here is a 288-residue protein sequence, read N- to C-terminus: Bifunctional protein FolD (288 aa).

Residues 171-173 (GRS), Ser-196, and Thr-237 contribute to the NADP(+) site.

The protein belongs to the tetrahydrofolate dehydrogenase/cyclohydrolase family. Homodimer.

It catalyses the reaction (6R)-5,10-methylene-5,6,7,8-tetrahydrofolate + NADP(+) = (6R)-5,10-methenyltetrahydrofolate + NADPH. The enzyme catalyses (6R)-5,10-methenyltetrahydrofolate + H2O = (6R)-10-formyltetrahydrofolate + H(+). Its pathway is one-carbon metabolism; tetrahydrofolate interconversion. Its function is as follows. Catalyzes the oxidation of 5,10-methylenetetrahydrofolate to 5,10-methenyltetrahydrofolate and then the hydrolysis of 5,10-methenyltetrahydrofolate to 10-formyltetrahydrofolate. This chain is Bifunctional protein FolD, found in Elusimicrobium minutum (strain Pei191).